A 205-amino-acid polypeptide reads, in one-letter code: GTP cyclohydrolase-2 (205 aa).

49–53 provides a ligand contact to GTP; sequence RIHSE. Residues C54, C65, and C67 each coordinate Zn(2+). Residues Q70, 92–94, and T114 each bind GTP; that span reads EGR. D126 serves as the catalytic Proton acceptor. R128 acts as the Nucleophile in catalysis. Positions 149 and 154 each coordinate GTP.

Belongs to the GTP cyclohydrolase II family. It depends on Zn(2+) as a cofactor.

It carries out the reaction GTP + 4 H2O = 2,5-diamino-6-hydroxy-4-(5-phosphoribosylamino)-pyrimidine + formate + 2 phosphate + 3 H(+). The protein operates within cofactor biosynthesis; riboflavin biosynthesis; 5-amino-6-(D-ribitylamino)uracil from GTP: step 1/4. Its function is as follows. Catalyzes the conversion of GTP to 2,5-diamino-6-ribosylamino-4(3H)-pyrimidinone 5'-phosphate (DARP), formate and pyrophosphate. This chain is GTP cyclohydrolase-2, found in Shewanella woodyi (strain ATCC 51908 / MS32).